The primary structure comprises 407 residues: Peptidase T (407 aa).

Zn(2+) is bound at residue His78. Residue Asp80 is part of the active site. Asp139 lines the Zn(2+) pocket. The Proton acceptor role is filled by Glu173. Residues Glu174, Asp196, and His378 each coordinate Zn(2+).

The protein belongs to the peptidase M20B family. Zn(2+) is required as a cofactor.

The protein localises to the cytoplasm. It carries out the reaction Release of the N-terminal residue from a tripeptide.. Its function is as follows. Cleaves the N-terminal amino acid of tripeptides. In Shewanella halifaxensis (strain HAW-EB4), this protein is Peptidase T.